The primary structure comprises 327 residues: Phenylalanine--tRNA ligase alpha subunit (327 aa).

Glu253 contacts Mg(2+).

Belongs to the class-II aminoacyl-tRNA synthetase family. Phe-tRNA synthetase alpha subunit type 1 subfamily. In terms of assembly, tetramer of two alpha and two beta subunits. Mg(2+) serves as cofactor.

The protein localises to the cytoplasm. It carries out the reaction tRNA(Phe) + L-phenylalanine + ATP = L-phenylalanyl-tRNA(Phe) + AMP + diphosphate + H(+). The sequence is that of Phenylalanine--tRNA ligase alpha subunit from Laribacter hongkongensis (strain HLHK9).